The primary structure comprises 95 residues: Aspartyl/glutamyl-tRNA(Asn/Gln) amidotransferase subunit C (95 aa).

This sequence belongs to the GatC family. In terms of assembly, heterotrimer of A, B and C subunits.

The catalysed reaction is L-glutamyl-tRNA(Gln) + L-glutamine + ATP + H2O = L-glutaminyl-tRNA(Gln) + L-glutamate + ADP + phosphate + H(+). It carries out the reaction L-aspartyl-tRNA(Asn) + L-glutamine + ATP + H2O = L-asparaginyl-tRNA(Asn) + L-glutamate + ADP + phosphate + 2 H(+). Functionally, allows the formation of correctly charged Asn-tRNA(Asn) or Gln-tRNA(Gln) through the transamidation of misacylated Asp-tRNA(Asn) or Glu-tRNA(Gln) in organisms which lack either or both of asparaginyl-tRNA or glutaminyl-tRNA synthetases. The reaction takes place in the presence of glutamine and ATP through an activated phospho-Asp-tRNA(Asn) or phospho-Glu-tRNA(Gln). This chain is Aspartyl/glutamyl-tRNA(Asn/Gln) amidotransferase subunit C, found in Rhodopseudomonas palustris (strain BisB5).